The sequence spans 65 residues: Large ribosomal subunit protein bL33c (65 aa).

It belongs to the bacterial ribosomal protein bL33 family.

Its subcellular location is the plastid. The protein resides in the chloroplast. The chain is Large ribosomal subunit protein bL33c from Psilotum nudum (Whisk fern).